The chain runs to 521 residues: Medium/long-chain-fatty-acid--[acyl-carrier-protein] ligase MbtM (521 aa).

The protein belongs to the ATP-dependent AMP-binding enzyme family.

The enzyme catalyses a long-chain fatty acid + holo-[ACP] + ATP = a long-chain fatty acyl-[ACP] + AMP + diphosphate. The catalysed reaction is a medium-chain fatty acid + holo-[ACP] + ATP = a medium-chain fatty acyl-[ACP] + AMP + diphosphate. It functions in the pathway siderophore biosynthesis; mycobactin biosynthesis. Activates lipidic moieties required for mycobactin biosynthesis. Converts medium- to long-chain aliphatic fatty acids into acyl adenylate, which is further transferred on to the phosphopantetheine arm of the carrier protein MbtL. The protein is Medium/long-chain-fatty-acid--[acyl-carrier-protein] ligase MbtM (mbtM) of Mycobacterium tuberculosis (strain CDC 1551 / Oshkosh).